An 83-amino-acid chain; its full sequence is MSSGGLLLLLGLLTLWEILTPVSSKDRPHFCHLPHDTGPCNRNTQAFYYNPVYHTCLKFIYGGCQGNSNNFKTIDECKRTCAA.

A signal peptide spans 1 to 24 (MSSGGLLLLLGLLTLWEILTPVSS). The region spanning 31 to 81 (CHLPHDTGPCNRNTQAFYYNPVYHTCLKFIYGGCQGNSNNFKTIDECKRTC) is the BPTI/Kunitz inhibitor domain. 3 disulfide bridges follow: Cys31-Cys81, Cys40-Cys64, and Cys56-Cys77.

The protein belongs to the venom Kunitz-type family. Expressed by the venom gland.

The protein localises to the secreted. Serine protease inhibitor. The chain is Kunitz-type serine protease inhibitor tigerin-3 from Notechis scutatus scutatus (Mainland tiger snake).